Consider the following 532-residue polypeptide: Glutamate--cysteine ligase (532 aa).

The protein belongs to the glutamate--cysteine ligase type 1 family. Type 1 subfamily.

The catalysed reaction is L-cysteine + L-glutamate + ATP = gamma-L-glutamyl-L-cysteine + ADP + phosphate + H(+). It participates in sulfur metabolism; glutathione biosynthesis; glutathione from L-cysteine and L-glutamate: step 1/2. This chain is Glutamate--cysteine ligase, found in Pseudomonas fluorescens (strain Pf0-1).